A 372-amino-acid polypeptide reads, in one-letter code: Dual-specificity RNA methyltransferase RlmN (372 aa).

The active-site Proton acceptor is Glu-94. In terms of domain architecture, Radical SAM core spans 100 to 339 (DGDRATLCVS…VTIRKTRGDD (240 aa)). Cys-107 and Cys-344 are oxidised to a cystine. Positions 114, 118, and 121 each coordinate [4Fe-4S] cluster. Residues 168-169 (GE), Ser-200, 222-224 (SLH), and Asn-301 contribute to the S-adenosyl-L-methionine site. Cys-344 functions as the S-methylcysteine intermediate in the catalytic mechanism.

Belongs to the radical SAM superfamily. RlmN family. The cofactor is [4Fe-4S] cluster.

The protein localises to the cytoplasm. The catalysed reaction is adenosine(2503) in 23S rRNA + 2 reduced [2Fe-2S]-[ferredoxin] + 2 S-adenosyl-L-methionine = 2-methyladenosine(2503) in 23S rRNA + 5'-deoxyadenosine + L-methionine + 2 oxidized [2Fe-2S]-[ferredoxin] + S-adenosyl-L-homocysteine. The enzyme catalyses adenosine(37) in tRNA + 2 reduced [2Fe-2S]-[ferredoxin] + 2 S-adenosyl-L-methionine = 2-methyladenosine(37) in tRNA + 5'-deoxyadenosine + L-methionine + 2 oxidized [2Fe-2S]-[ferredoxin] + S-adenosyl-L-homocysteine. Functionally, specifically methylates position 2 of adenine 2503 in 23S rRNA and position 2 of adenine 37 in tRNAs. m2A2503 modification seems to play a crucial role in the proofreading step occurring at the peptidyl transferase center and thus would serve to optimize ribosomal fidelity. The chain is Dual-specificity RNA methyltransferase RlmN from Aliivibrio fischeri (strain MJ11) (Vibrio fischeri).